The sequence spans 382 residues: Pyrimidine monooxygenase RutA (382 aa).

FMN contacts are provided by residues 68-69 (IK), Asn134, Glu143, 159-160 (RY), and Ser209.

It belongs to the NtaA/SnaA/DszA monooxygenase family. RutA subfamily.

The catalysed reaction is uracil + FMNH2 + NADH + O2 = (Z)-3-ureidoacrylate + FMN + NAD(+) + H2O + H(+). The enzyme catalyses thymine + FMNH2 + NADH + O2 = (Z)-2-methylureidoacrylate + FMN + NAD(+) + H2O + H(+). Catalyzes the pyrimidine ring opening between N-3 and C-4 by an unusual flavin hydroperoxide-catalyzed mechanism, adding oxygen atoms in the process to yield ureidoacrylate peracid, that immediately reacts with FMN forming ureidoacrylate and FMN-N(5)-oxide. The FMN-N(5)-oxide reacts spontaneously with NADH to produce FMN. Requires the flavin reductase RutF to regenerate FMN in vivo. This is Pyrimidine monooxygenase RutA from Escherichia coli (strain 55989 / EAEC).